A 677-amino-acid chain; its full sequence is Methionine--tRNA ligase (677 aa).

A 'HIGH' region motif is present at residues 15–25; the sequence is PYANGSIHLGH. C146, C149, C159, and C162 together coordinate Zn(2+). A 'KMSKS' region motif is present at residues 333–337; it reads KMSKS. K336 contacts ATP. A tRNA-binding domain is found at 575 to 677; the sequence is DFAKIDLRVA…DGAKPGQQVK (103 aa).

This sequence belongs to the class-I aminoacyl-tRNA synthetase family. MetG type 1 subfamily. As to quaternary structure, homodimer. Zn(2+) is required as a cofactor.

The protein localises to the cytoplasm. The enzyme catalyses tRNA(Met) + L-methionine + ATP = L-methionyl-tRNA(Met) + AMP + diphosphate. Is required not only for elongation of protein synthesis but also for the initiation of all mRNA translation through initiator tRNA(fMet) aminoacylation. The chain is Methionine--tRNA ligase from Salmonella typhi.